A 779-amino-acid polypeptide reads, in one-letter code: Protein phosphatase 1 regulatory subunit 21 (779 aa).

Coiled-coil stretches lie at residues 2–212 (AATA…QAAL) and 556–614 (TESR…ETVQ). Disordered stretches follow at residues 85 to 105 (ETRG…SQEQ) and 612 to 637 (TVQE…QREP). Residues 96 to 105 (ESSSQLSQEQ) are compositionally biased toward low complexity. Basic and acidic residues predominate over residues 624–637 (EQKEETTEKSQREP). Residues 693–739 (AECRALAKRLSLAEKSKESLTEELKLASQSISRLQDELMTTKRSYED) adopt a coiled-coil conformation. The disordered stretch occupies residues 760–779 (EEIDTLKMTSKGNSKKNKTR).

Component of the FERRY complex.

The protein resides in the early endosome. In terms of biological role, component of the FERRY complex (Five-subunit Endosomal Rab5 and RNA/ribosome intermediary). The FERRY complex directly interacts with mRNAs and RAB5A, and functions as a RAB5A effector involved in the localization and the distribution of specific mRNAs most likely by mediating their endosomal transport. The complex recruits mRNAs and ribosomes to early endosomes through direct mRNA-interaction. Putative regulator of protein phosphatase 1 (PP1) activity. May play a role in the endosomal sorting process or in endosome maturation pathway. This chain is Protein phosphatase 1 regulatory subunit 21 (PPP1R21), found in Gallus gallus (Chicken).